A 375-amino-acid polypeptide reads, in one-letter code: Chaperone protein DnaJ (375 aa).

Positions 5–70 (DYYEVLGVSR…EKRARYDRFG (66 aa)) constitute a J domain. The segment at 136-214 (GDEVTLRIPK…CRGAGQVQDI (79 aa)) adopts a CR-type zinc-finger fold. Cys-149, Cys-152, Cys-166, Cys-169, Cys-188, Cys-191, Cys-202, and Cys-205 together coordinate Zn(2+). CXXCXGXG motif repeat units lie at residues 149–156 (CPDCSGSG), 166–173 (CPQCGGSG), 188–195 (CSACRGEG), and 202–209 (CPRCRGAG).

This sequence belongs to the DnaJ family. Homodimer. It depends on Zn(2+) as a cofactor.

It localises to the cytoplasm. In terms of biological role, participates actively in the response to hyperosmotic and heat shock by preventing the aggregation of stress-denatured proteins and by disaggregating proteins, also in an autonomous, DnaK-independent fashion. Unfolded proteins bind initially to DnaJ; upon interaction with the DnaJ-bound protein, DnaK hydrolyzes its bound ATP, resulting in the formation of a stable complex. GrpE releases ADP from DnaK; ATP binding to DnaK triggers the release of the substrate protein, thus completing the reaction cycle. Several rounds of ATP-dependent interactions between DnaJ, DnaK and GrpE are required for fully efficient folding. Also involved, together with DnaK and GrpE, in the DNA replication of plasmids through activation of initiation proteins. In Oleidesulfovibrio alaskensis (strain ATCC BAA-1058 / DSM 17464 / G20) (Desulfovibrio alaskensis), this protein is Chaperone protein DnaJ.